A 122-amino-acid chain; its full sequence is UPF0102 protein CLL_A1253 (122 aa).

The protein belongs to the UPF0102 family.

This Clostridium botulinum (strain Eklund 17B / Type B) protein is UPF0102 protein CLL_A1253.